The primary structure comprises 458 residues: UDP-N-acetylmuramate--L-alanine ligase (458 aa).

Position 115 to 121 (115 to 121 (GSHGKTT)) interacts with ATP.

The protein belongs to the MurCDEF family.

The protein resides in the cytoplasm. It carries out the reaction UDP-N-acetyl-alpha-D-muramate + L-alanine + ATP = UDP-N-acetyl-alpha-D-muramoyl-L-alanine + ADP + phosphate + H(+). Its pathway is cell wall biogenesis; peptidoglycan biosynthesis. Its function is as follows. Cell wall formation. The sequence is that of UDP-N-acetylmuramate--L-alanine ligase from Anaeromyxobacter sp. (strain Fw109-5).